Consider the following 155-residue polypeptide: Aspartate carbamoyltransferase regulatory chain (155 aa).

Zn(2+) is bound by residues Cys-111, Cys-116, Cys-137, and Cys-140.

This sequence belongs to the PyrI family. In terms of assembly, contains catalytic and regulatory chains. Zn(2+) serves as cofactor.

Functionally, involved in allosteric regulation of aspartate carbamoyltransferase. The chain is Aspartate carbamoyltransferase regulatory chain from Haloarcula marismortui (strain ATCC 43049 / DSM 3752 / JCM 8966 / VKM B-1809) (Halobacterium marismortui).